The following is a 444-amino-acid chain: Alpha-N-acetylgalactosaminidase (444 aa).

NAD(+) contacts are provided by residues 30–31, Asp52, Asn80, 101–104, His107, 121–122, and Asn150; these read LR, WEWH, and EV. Tyr179 provides a ligand contact to substrate. 208-212 lines the NAD(+) pocket; it reads SEAKW. Substrate-binding positions include Arg213, 225–228, and Tyr307; that span reads YPTH. NAD(+) is bound at residue Tyr225.

It belongs to the Gfo/Idh/MocA family. Glycosyl hydrolase 109 subfamily. Requires NAD(+) as cofactor.

It catalyses the reaction Cleavage of non-reducing alpha-(1-&gt;3)-N-acetylgalactosamine residues from human blood group A and AB mucin glycoproteins, Forssman hapten and blood group A lacto series glycolipids.. Functionally, glycosidase that has specific alpha-N-acetylgalactosaminidase activity. The protein is Alpha-N-acetylgalactosaminidase (nagA) of Elizabethkingia meningoseptica (Chryseobacterium meningosepticum).